The following is a 506-amino-acid chain: Exopolysaccharide phosphotransferase NFA_48680 (506 aa).

The disordered stretch occupies residues Pro484–Ala506.

The protein belongs to the stealth family.

In Nocardia farcinica (strain IFM 10152), this protein is Exopolysaccharide phosphotransferase NFA_48680.